The following is a 485-amino-acid chain: MFS-type transporter phm3 (485 aa).

Positions 1–22 (MSLQDPTKEHNNTSPSPKDEKT) are disordered. A run of 12 helical transmembrane segments spans residues 55 to 75 (FTLY…LLVA), 83 to 103 (IVAS…PFLL), 113 to 133 (LWLY…CALS), 144 to 164 (FICG…IADL), 175 to 195 (ALFG…GGFV), 203 to 223 (WTFY…AVIM), 278 to 298 (PIVL…YLLF), 317 to 337 (GLAF…FAIL), 357 to 377 (LVLM…YGWS), 384 to 404 (WIVP…ILMP), 421 to 441 (ALAV…LAGP), and 449 to 469 (LGWG…VPFV).

It belongs to the major facilitator superfamily.

The protein resides in the cell membrane. Functionally, MFS-type transporter; part of the gene cluster that mediates the biosynthesis of the trans-fused decalin-containing tetramic acid phomasetin. The chain is MFS-type transporter phm3 from Pyrenochaetopsis sp.